Reading from the N-terminus, the 204-residue chain is Peptidyl-tRNA hydrolase (204 aa).

Tyr14 is a tRNA binding site. His19 (proton acceptor) is an active-site residue. 3 residues coordinate tRNA: Tyr64, Asn66, and Asn112.

The protein belongs to the PTH family. As to quaternary structure, monomer.

It is found in the cytoplasm. The enzyme catalyses an N-acyl-L-alpha-aminoacyl-tRNA + H2O = an N-acyl-L-amino acid + a tRNA + H(+). Hydrolyzes ribosome-free peptidyl-tRNAs (with 1 or more amino acids incorporated), which drop off the ribosome during protein synthesis, or as a result of ribosome stalling. Functionally, catalyzes the release of premature peptidyl moieties from peptidyl-tRNA molecules trapped in stalled 50S ribosomal subunits, and thus maintains levels of free tRNAs and 50S ribosomes. This Nitrobacter hamburgensis (strain DSM 10229 / NCIMB 13809 / X14) protein is Peptidyl-tRNA hydrolase.